The chain runs to 220 residues: Large ribosomal subunit protein bL25 (220 aa).

Positions 186–199 are enriched in acidic residues; that stretch reads ELEDEDEDEDEVAA. Residues 186–220 are disordered; that stretch reads ELEDEDEDEDEVAADEVPATEVDDQAAVKEGEGKE. Residues 211–220 are compositionally biased toward basic and acidic residues; the sequence is AAVKEGEGKE.

Belongs to the bacterial ribosomal protein bL25 family. CTC subfamily. Part of the 50S ribosomal subunit; part of the 5S rRNA/L5/L18/L25 subcomplex. Contacts the 5S rRNA. Binds to the 5S rRNA independently of L5 and L18.

In terms of biological role, this is one of the proteins that binds to the 5S RNA in the ribosome where it forms part of the central protuberance. The sequence is that of Large ribosomal subunit protein bL25 from Christiangramia forsetii (strain DSM 17595 / CGMCC 1.15422 / KT0803) (Gramella forsetii).